Reading from the N-terminus, the 77-residue chain is Dermatoxin-A1 (77 aa).

Positions 1 to 22 are cleaved as a signal peptide; that stretch reads MAFLKKSLFLVLFLGLVPLFLC. Positions 23–42 are excised as a propeptide; the sequence is ENEKREGENEKEENDDQSEE. Q76 is subject to Glutamine amide.

Belongs to the frog skin active peptide (FSAP) family. Dermatoxin subfamily. In terms of tissue distribution, expressed by the skin glands.

The protein localises to the secreted. Its function is as follows. Possesses a potent antimicrobial activity against Gram-positive and Gram-negative bacteria. Probably acts by disturbing membrane functions with its amphipathic structure. In Agalychnis annae (Blue-sided leaf frog), this protein is Dermatoxin-A1.